We begin with the raw amino-acid sequence, 364 residues long: Guanine nucleotide-binding protein alpha-8 subunit (364 aa).

G2 is lipidated: N-myristoyl glycine. Residue C5 is the site of S-palmitoyl cysteine attachment. Residues 38 to 364 (KILKLLILGP…QHTMQKVGIQ (327 aa)) form the G-alpha domain. A G1 motif region spans residues 41 to 54 (KLLILGPGESGKST). Residues 46 to 53 (GPGESGKS), 186 to 192 (LKSRVPT), 211 to 215 (DVGGQ), 280 to 283 (NKID), and A336 contribute to the GTP site. Residues S53 and T192 each coordinate Mg(2+). Residues 184-192 (DILKSRVPT) form a G2 motif region. The G3 motif stretch occupies residues 207–216 (FRIFDVGGQR). Residues 276–283 (ILFLNKID) form a G4 motif region. The segment at 334-339 (TCATDT) is G5 motif.

Belongs to the G-alpha family. G proteins are composed of 3 units; alpha, beta and gamma. The alpha chain contains the guanine nucleotide binding site.

Its function is as follows. Guanine nucleotide-binding proteins (G proteins) are involved as modulators or transducers in various transmembrane signaling systems. The polypeptide is Guanine nucleotide-binding protein alpha-8 subunit (gpa-8) (Caenorhabditis elegans).